The sequence spans 172 residues: L-amino acid oxidase (172 aa).

44–47 (GPMR) contacts FAD. Positions 47 and 103 each coordinate substrate.

It belongs to the flavin monoamine oxidase family. FIG1 subfamily. In terms of assembly, heterodimer; non-covalently linked. Requires FAD as cofactor. Post-translationally, N-glycosylated. As to expression, expressed by the venom gland.

Its subcellular location is the secreted. It carries out the reaction an L-alpha-amino acid + O2 + H2O = a 2-oxocarboxylate + H2O2 + NH4(+). It catalyses the reaction L-leucine + O2 + H2O = 4-methyl-2-oxopentanoate + H2O2 + NH4(+). The catalysed reaction is L-phenylalanine + O2 + H2O = 3-phenylpyruvate + H2O2 + NH4(+). The enzyme catalyses L-tryptophan + O2 + H2O = indole-3-pyruvate + H2O2 + NH4(+). It carries out the reaction L-methionine + O2 + H2O = 4-methylsulfanyl-2-oxobutanoate + H2O2 + NH4(+). It catalyses the reaction L-isoleucine + O2 + H2O = (S)-3-methyl-2-oxopentanoate + H2O2 + NH4(+). The catalysed reaction is L-arginine + O2 + H2O = 5-guanidino-2-oxopentanoate + H2O2 + NH4(+). The enzyme catalyses L-tyrosine + O2 + H2O = 3-(4-hydroxyphenyl)pyruvate + H2O2 + NH4(+). Activity is increased by Mn(2+) ions. Inhibited by Zn(2+), Ni(2+), Co(2+), Cu(2+) and Al(3+). No significant activity change by Na(+), K(+), Ca(2+), Mg(2+) and Ba(2+) ions. Both isoform are completely inhibited by L-Cys and reduced glutathione. O-phenanthroline, beta-mercaptoethanol and PMSF completely inhibit the enzymatic activity of LAAOII, but have no activity on LAAOI. Iodoacetic acid inhibits the enzymatic activity of LAAOII by 46% but has no effect on the LAAOI activity. Catalyzes an oxidative deamination of predominantly hydrophobic and aromatic L-amino acids, thus producing hydrogen peroxide that may contribute to the diverse toxic effects of this enzyme. Shows high specificity for L-Arg, L-Met, L-Phe, L-Leu, L-Tyr, L-Ile and L-Trp, low specificity for L-Val, L-Ala, L-Asn, L-Gln, and no specificity for L-Pro, L-Ser, L-Thr, L-Cys, L-Gly and L-Asp. Exhibits diverse biological activities, such as hemorrhage, hemolysis, edema, antibacterial and antiparasitic activities, as well as regulation of platelet aggregation. Its effect on platelets is controversial, since it either induces aggregation or inhibits agonist-induced aggregation. These different effects are probably due to different experimental conditions. The chain is L-amino acid oxidase from Cerastes cerastes (Horned desert viper).